A 270-amino-acid chain; its full sequence is Interleukin-33 (270 aa).

A homeodomain-like HTH domain region spans residues 1–65 (MKPKMKYSTN…EACYFRRETT (65 aa)). Residues 1 to 94 (MKPKMKYSTN…CQQQSTVECF (94 aa)) constitute a propeptide that is removed on maturation. The segment at 64-111 (TTKRPSLKTGRKHKRHLVLAACQQQSTVECFAFGISGVQKYTRALHDS) is interaction with RELA.

Belongs to the IL-1 family. Highly divergent. Forms a 1:1:1 heterotrimeric complex with its primary high-affinity receptor IL1RL1 and the coreceptor IL1RAP. Interacts with cargo receptor TMED10; the interaction mediates the translocation from the cytoplasm into the ERGIC (endoplasmic reticulum-Golgi intermediate compartment) and thereby secretion. As to quaternary structure, (Microbial infection) Interacts (in reduced form) with H.polygyrus ARI. In terms of processing, the full-length protein can be released from cells and is able to signal via the IL1RL1/ST2 receptor. However, proteolytic processing by CELA1, CSTG/cathepsin G and ELANE/neutrophil elastase produces C-terminal peptides that are more active than the unprocessed full length protein. May also be proteolytically processed by calpains. Proteolytic cleavage mediated by apoptotic caspases including CASP3 and CASP7 results in IL33 inactivation. In vitro proteolytic cleavage by CASP1 was reported but could not be confirmed in vivo suggesting that IL33 is probably not a direct substrate for that caspase. As to expression, expressed at high level in high endothelial venules found in tonsils, Peyer patches and mesenteric lymph nodes. Almost undetectable in placenta.

Its subcellular location is the nucleus. It is found in the chromosome. It localises to the cytoplasm. The protein localises to the cytoplasmic vesicle. The protein resides in the secretory vesicle. Its subcellular location is the secreted. In terms of biological role, cytokine that binds to and signals through the IL1RL1/ST2 receptor which in turn activates NF-kappa-B and MAPK signaling pathways in target cells. Involved in the maturation of Th2 cells inducing the secretion of T-helper type 2-associated cytokines. Also involved in activation of mast cells, basophils, eosinophils and natural killer cells. Acts as an enhancer of polarization of alternatively activated macrophages. Acts as a chemoattractant for Th2 cells, and may function as an 'alarmin', that amplifies immune responses during tissue injury. Induces rapid UCP2-dependent mitochondrial rewiring that attenuates the generation of reactive oxygen species and preserves the integrity of Krebs cycle required for persistent production of itaconate and subsequent GATA3-dependent differentiation of inflammation-resolving alternatively activated macrophages. Its function is as follows. In quiescent endothelia the uncleaved form is constitutively and abundantly expressed, and acts as a chromatin-associated nuclear factor with transcriptional repressor properties, it may sequester nuclear NF-kappaB/RELA, lowering expression of its targets. This form is rapidely lost upon angiogenic or pro-inflammatory activation. This chain is Interleukin-33, found in Homo sapiens (Human).